The following is a 448-amino-acid chain: Exodeoxyribonuclease 7 large subunit (448 aa).

The protein belongs to the XseA family. In terms of assembly, heterooligomer composed of large and small subunits.

It localises to the cytoplasm. It catalyses the reaction Exonucleolytic cleavage in either 5'- to 3'- or 3'- to 5'-direction to yield nucleoside 5'-phosphates.. Functionally, bidirectionally degrades single-stranded DNA into large acid-insoluble oligonucleotides, which are then degraded further into small acid-soluble oligonucleotides. In Shewanella baltica (strain OS185), this protein is Exodeoxyribonuclease 7 large subunit.